The sequence spans 700 residues: Kin of IRRE-like protein 2 (700 aa).

A signal peptide spans Met-1–Ser-19. Topologically, residues Ser-20–Arg-507 are extracellular. Ig-like C2-type domains follow at residues Pro-21 to His-115, Pro-120 to Ser-219, Pro-224 to Glu-304, Pro-309 to Thr-391, and Pro-395 to Leu-497. Cysteines 42 and 100 form a disulfide. N-linked (GlcNAc...) asparagine glycosylation is present at Asn-140. 2 disulfide bridges follow: Cys-143-Cys-201 and Cys-245-Cys-288. The short motif at Arg-146–Asp-148 is the Cell attachment site element. A glycan (N-linked (GlcNAc...) asparagine) is linked at Asn-298. 2 disulfide bridges follow: Cys-330/Cys-372 and Cys-416/Cys-482. A glycan (N-linked (GlcNAc...) asparagine) is linked at Asn-481. Residues Ile-508 to Leu-528 form a helical membrane-spanning segment. At Cys-529–Val-700 the chain is on the cytoplasmic side. Residues Leu-542–Ser-576 are disordered. Ser-563 carries the post-translational modification Phosphoserine. A compositionally biased stretch (basic and acidic residues) spans Ser-564–Ser-576. Phosphotyrosine is present on residues Tyr-595, Tyr-596, and Tyr-653. The interval Phe-671–Val-700 is disordered. Over residues Ser-689–Val-700 the composition is skewed to polar residues.

The protein belongs to the immunoglobulin superfamily. Homodimer. Interacts with NPHS2/podocin (via the C-terminus). Interacts with NPHS1 (via the Ig-like domains). Interacts with FYN. In terms of processing, N-glycosylated. Post-translationally, phosphorylated at Ser-548 or Ser-549; due to site ambiguity, the exact position of the serine phosphorylation could not be determined. Phosphorylation at residues Tyr-631 and/or Tyr-632. FYN mediates tyrosine phosphorylation in pancreatic beta-cells. The extracellular domain is cleaved leading to the generation of a soluble fragment and a membrane-bound C-terminal fragment, which is further cleaved by gamma-secretase. Highly expressed in beta-cells of the pancreatic islets. Expression is seen in podocytes of kidney glomeruli, and in the cerebellum and hindbrain at 12.5 dpc, in the spinal cord at 10.5 dpc, and in retina and hypothalamus at 13.5 dpc.

Its subcellular location is the cell membrane. In terms of biological role, may regulate basal insulin secretion. In Mus musculus (Mouse), this protein is Kin of IRRE-like protein 2 (Kirrel2).